The following is a 50-amino-acid chain: Insulin (50 aa).

3 disulfides stabilise this stretch: Cys-7-Cys-36, Cys-19-Cys-49, and Cys-35-Cys-40.

This sequence belongs to the insulin family. Heterodimer of a B chain and an A chain linked by two disulfide bonds.

The protein localises to the secreted. Functionally, insulin decreases blood glucose concentration. It increases cell permeability to monosaccharides, amino acids and fatty acids. It accelerates glycolysis, the pentose phosphate cycle, and glycogen synthesis in liver. This Proechimys guairae (Guaira spiny rat) protein is Insulin (INS).